Reading from the N-terminus, the 98-residue chain is Co-chaperonin GroES 4 (98 aa).

It belongs to the GroES chaperonin family. As to quaternary structure, heptamer of 7 subunits arranged in a ring. Interacts with the chaperonin GroEL.

It is found in the cytoplasm. In terms of biological role, together with the chaperonin GroEL, plays an essential role in assisting protein folding. The GroEL-GroES system forms a nano-cage that allows encapsulation of the non-native substrate proteins and provides a physical environment optimized to promote and accelerate protein folding. GroES binds to the apical surface of the GroEL ring, thereby capping the opening of the GroEL channel. The polypeptide is Co-chaperonin GroES 4 (Mesorhizobium japonicum (strain LMG 29417 / CECT 9101 / MAFF 303099) (Mesorhizobium loti (strain MAFF 303099))).